A 235-amino-acid chain; its full sequence is MSKNSKAYREAAEKVDRTKLYTPLEAAKLAKETSSKKQDATVEVAIRLGVDPRKADQMVRGTVNLPHGTGKTARVAVFAVGEKAEQAQAAGADIVGSDDLIEKIQGGFLDFDAAIATPDQMAKVGRIARVLGPRGLMPNPKTGTVTPDVAKAVQDIKGGKINFRVDKQANLHFIIGKASFDETKLAENYGAALDEVLRAKPSSSKGRYLKKVTVSTTTGPGIPVDPSVTRNFTEA.

The protein belongs to the universal ribosomal protein uL1 family. In terms of assembly, part of the 50S ribosomal subunit.

Its function is as follows. Binds directly to 23S rRNA. The L1 stalk is quite mobile in the ribosome, and is involved in E site tRNA release. Functionally, protein L1 is also a translational repressor protein, it controls the translation of the L11 operon by binding to its mRNA. The protein is Large ribosomal subunit protein uL1 of Mycolicibacterium smegmatis (strain ATCC 700084 / mc(2)155) (Mycobacterium smegmatis).